The sequence spans 501 residues: Aspartate--tRNA ligase, cytoplasmic (501 aa).

Thr52 is modified (phosphothreonine). Lys74 bears the N6-acetyllysine mark. Residue Glu229 coordinates L-aspartate. Ser249 carries the post-translational modification Phosphoserine. The interval 251 to 254 is aspartate; the sequence is QLYK. Arg273 is a binding site for L-aspartate. ATP contacts are provided by residues 273 to 275 and 281 to 283; these read RAE and RHL. Lys374 is modified (N6-acetyllysine). Residues 411-415 form a binding site for the 3'-end of tRNA region; it reads KQSNS. Glu424 contacts ATP. L-aspartate-binding residues include Ser427 and Arg431. 472 to 475 is a binding site for ATP; the sequence is GLER. Thr500 is subject to Phosphothreonine; by PKA.

The protein belongs to the class-II aminoacyl-tRNA synthetase family. Type 2 subfamily. In terms of assembly, homodimer. Part of a multisubunit complex that groups tRNA ligases for Arg (RARS1), Asp (DARS1), Gln (QARS1), Ile (IARS1), Leu (LARS1), Lys (KARS1), Met (MARS1) the bifunctional ligase for Glu and Pro (EPRS1) and the auxiliary subunits AIMP1/p43, AIMP2/p38 and EEF1E1/p18. As to expression, expression in the developing and adult brain shows similar patterns. Highly expressed in the ventricular and subventricular zones, including hippocampal subfields, the midlateral temporal cortex and the frontal polar cortex. The cerebellum, cerebral cortex, hippocampus, and lateral ventricle show preferential neuronal expression. Expression in the peripheral neurons is evident in the colon.

Its subcellular location is the cytoplasm. The protein resides in the cytosol. The catalysed reaction is tRNA(Asp) + L-aspartate + ATP = L-aspartyl-tRNA(Asp) + AMP + diphosphate. Functionally, catalyzes the specific attachment of an amino acid to its cognate tRNA in a 2 step reaction: the amino acid (AA) is first activated by ATP to form AA-AMP and then transferred to the acceptor end of the tRNA. The sequence is that of Aspartate--tRNA ligase, cytoplasmic from Homo sapiens (Human).